The primary structure comprises 313 residues: Acetyl-coenzyme A carboxylase carboxyl transferase subunit alpha (313 aa).

The CoA carboxyltransferase C-terminal domain occupies 34-288; that stretch reads KLKDQRDIAL…KNVVLEAVNE (255 aa).

Belongs to the AccA family. Acetyl-CoA carboxylase is a heterohexamer composed of biotin carboxyl carrier protein (AccB), biotin carboxylase (AccC) and two subunits each of ACCase subunit alpha (AccA) and ACCase subunit beta (AccD).

The protein localises to the cytoplasm. It carries out the reaction N(6)-carboxybiotinyl-L-lysyl-[protein] + acetyl-CoA = N(6)-biotinyl-L-lysyl-[protein] + malonyl-CoA. Its pathway is lipid metabolism; malonyl-CoA biosynthesis; malonyl-CoA from acetyl-CoA: step 1/1. Functionally, component of the acetyl coenzyme A carboxylase (ACC) complex. First, biotin carboxylase catalyzes the carboxylation of biotin on its carrier protein (BCCP) and then the CO(2) group is transferred by the carboxyltransferase to acetyl-CoA to form malonyl-CoA. The chain is Acetyl-coenzyme A carboxylase carboxyl transferase subunit alpha from Fusobacterium nucleatum subsp. nucleatum (strain ATCC 25586 / DSM 15643 / BCRC 10681 / CIP 101130 / JCM 8532 / KCTC 2640 / LMG 13131 / VPI 4355).